A 1155-amino-acid polypeptide reads, in one-letter code: DNA-directed RNA polymerase subunit beta (1155 aa).

This sequence belongs to the RNA polymerase beta chain family. In terms of assembly, the RNAP catalytic core consists of 2 alpha, 1 beta, 1 beta' and 1 omega subunit. When a sigma factor is associated with the core the holoenzyme is formed, which can initiate transcription.

It catalyses the reaction RNA(n) + a ribonucleoside 5'-triphosphate = RNA(n+1) + diphosphate. Its function is as follows. DNA-dependent RNA polymerase catalyzes the transcription of DNA into RNA using the four ribonucleoside triphosphates as substrates. This chain is DNA-directed RNA polymerase subunit beta, found in Borreliella afzelii (strain PKo) (Borrelia afzelii).